The sequence spans 432 residues: MMHQSLGLGLVVFVAAPVVAFQTQYPLSPPFPERLHEEWDESCSISKSTAFETFKGPNNFSTSPSEHIHSVKITPSINATNWEQWEFDGLSHTGLSGLLMAFSRDASYAFFGQGNLRVEFYITLGDGTVIQELDYISESYVADCPGFTAGVWNSSDRSYSFHVTKDHQFARLKFDSWRVRGGFTMSSSTKPHLADGSPWTADGGKADATEISPGLHYGLSMGGADVNVDATLSSGRRIAFKGRGGSTRLWATDGWLKLCEGWKVFRAWAGPYSIVYWDVMGRMGRPGKYVSGHLFYNDELLVGSRVGNVSAEEDYVLFTDNYDGEMSGRYKDKNTGHTFEFASPSKDKKWKFDMQHVVTQYEMGAGAGFGMSGFANRVVGGEVGGVQYEGKGHSEQTYWPEYIEEWKIWLVWGFGFLGKGKTYVMKMVSYVL.

The first 20 residues, 1–20, serve as a signal peptide directing secretion; the sequence is MMHQSLGLGLVVFVAAPVVA. N-linked (GlcNAc...) asparagine glycosylation is found at Asn-59, Asn-78, Asn-153, and Asn-308.

This sequence belongs to the Diels-Alderase family.

It functions in the pathway mycotoxin biosynthesis. Functionally, hexane cyclase; part of the gene cluster that mediates the biosynthesis of pyrrocidines, fungal natural products containing a macrocyclic para-cyclophane connected to a decahydrofluorene ring system that show potent antibiotic activities toward Gram-negative bacteria. Within the pathway, pydB functions synergistically with pydE, pydX and pydZ to form the cyclophane. The pathway begins with the PKS-NRPS pydA which, with the help of the trans-enoyl reductase pydC, synthesizes the polyketide-tyrosyl acyl thioester product which can be reductively off-loaded by the terminal reductase (R) domain in pydA. The alpha/beta hydrolase pydG is then required to catalyze the subsequent Knoevenagel condensation that affords the 3-pyrrolin-2-one ring, whereas the four proteins pydB, pydE, pydX and pydZ then function synergistically to form the cyclophane. PydB and the membrane-bound pydX and pydZ are lipid-binding proteins that can sequester and mold the pdyG product into the inverse S-shape. Binding of the medium chain reductase pydE to the complex would trigger the cascade oxidative cyclization. PydY is involved the Diels-Alder cycloaddition that forms the decahydrofluorene core. Additional non-enzymatic hydroxylation yields pyrrocidine A2 which can be further reduced into pyrrocidine B by an endogenous reductase. The chain is Hexane cyclase pydB from Acremonium sp.